The sequence spans 162 residues: Protein A49 (162 aa).

It belongs to the poxviridae A49 protein family.

The protein is Protein A49 of Homo sapiens (Human).